A 438-amino-acid chain; its full sequence is Serine--tRNA ligase (438 aa).

235 to 237 (TAE) contributes to the L-serine binding site. ATP contacts are provided by residues 266-268 (RKE) and V282. E289 serves as a coordination point for L-serine. Residue 355–358 (ELVS) participates in ATP binding. Residue T393 participates in L-serine binding.

This sequence belongs to the class-II aminoacyl-tRNA synthetase family. Type-1 seryl-tRNA synthetase subfamily. As to quaternary structure, homodimer. The tRNA molecule binds across the dimer.

The enzyme catalyses tRNA(Ser) + L-serine + ATP = L-seryl-tRNA(Ser) + AMP + diphosphate + H(+). The catalysed reaction is tRNA(Sec) + L-serine + ATP = L-seryl-tRNA(Sec) + AMP + diphosphate + H(+). Its pathway is aminoacyl-tRNA biosynthesis; selenocysteinyl-tRNA(Sec) biosynthesis; L-seryl-tRNA(Sec) from L-serine and tRNA(Sec): step 1/1. Catalyzes the attachment of serine to tRNA(Ser). Is also able to aminoacylate tRNA(Sec) with serine, to form the misacylated tRNA L-seryl-tRNA(Sec), which will be further converted into selenocysteinyl-tRNA(Sec). This chain is Serine--tRNA ligase, found in Helianthus annuus (Common sunflower).